The sequence spans 111 residues: Ribonuclease P protein component (111 aa).

The protein belongs to the RnpA family. Consists of a catalytic RNA component (M1 or rnpB) and a protein subunit.

The enzyme catalyses Endonucleolytic cleavage of RNA, removing 5'-extranucleotides from tRNA precursor.. Its function is as follows. RNaseP catalyzes the removal of the 5'-leader sequence from pre-tRNA to produce the mature 5'-terminus. It can also cleave other RNA substrates such as 4.5S RNA. The protein component plays an auxiliary but essential role in vivo by binding to the 5'-leader sequence and broadening the substrate specificity of the ribozyme. This Clostridium botulinum (strain Loch Maree / Type A3) protein is Ribonuclease P protein component.